We begin with the raw amino-acid sequence, 146 residues long: 3-dehydroquinate dehydratase (146 aa).

Catalysis depends on tyrosine 22, which acts as the Proton acceptor. Residues asparagine 73, histidine 79, and aspartate 86 each coordinate substrate. Histidine 99 (proton donor) is an active-site residue. Residues 100–101 (IS) and arginine 110 each bind substrate.

It belongs to the type-II 3-dehydroquinase family. Homododecamer.

The catalysed reaction is 3-dehydroquinate = 3-dehydroshikimate + H2O. It participates in metabolic intermediate biosynthesis; chorismate biosynthesis; chorismate from D-erythrose 4-phosphate and phosphoenolpyruvate: step 3/7. Catalyzes a trans-dehydration via an enolate intermediate. This is 3-dehydroquinate dehydratase from Prochlorococcus marinus subsp. pastoris (strain CCMP1986 / NIES-2087 / MED4).